The following is a 345-amino-acid chain: Phosphoribosylformylglycinamidine cyclo-ligase (345 aa).

This sequence belongs to the AIR synthase family.

The protein resides in the cytoplasm. It catalyses the reaction 2-formamido-N(1)-(5-O-phospho-beta-D-ribosyl)acetamidine + ATP = 5-amino-1-(5-phospho-beta-D-ribosyl)imidazole + ADP + phosphate + H(+). Its pathway is purine metabolism; IMP biosynthesis via de novo pathway; 5-amino-1-(5-phospho-D-ribosyl)imidazole from N(2)-formyl-N(1)-(5-phospho-D-ribosyl)glycinamide: step 2/2. This chain is Phosphoribosylformylglycinamidine cyclo-ligase, found in Ligilactobacillus salivarius (strain UCC118) (Lactobacillus salivarius).